A 453-amino-acid polypeptide reads, in one-letter code: Protein amnionless (453 aa).

A signal peptide spans 1–19 (MGVLGRVLLWLQLCALTQA). The Extracellular portion of the chain corresponds to 20–357 (VSKLWVPNTD…ESGAHVWGSS (338 aa)). N-linked (GlcNAc...) asparagine glycosylation is present at N35. Disulfide bonds link C43-C96, C137-C213, C205-C211, C223-C249, C234-C250, and C239-C253. Residues 67–87 (SDMLLPLDGELVLASGAGFGV) form an interaction with CUBN region. In terms of domain architecture, VWFC spans 202-254 (PEDCADPSGCVCGNAEAQPWICAALLQPLGGRCPQAACHSALRPQGQCCDLCG). A helical transmembrane segment spans residues 358–378 (AAGLAGGVAAAVLLALLVLLV). Residues 379 to 453 (APPLLRRAGR…PLFAGAEAEA (75 aa)) lie on the Cytoplasmic side of the membrane.

Interacts (via extracellular region) with CUBN/cubilin, giving rise to a huge complex containing one AMN chain and three CUBN chains. In terms of processing, N-glycosylated. Post-translationally, a soluble form arises by proteolytic removal of the membrane anchor. As to expression, detected in proximal tubules in the kidney cortex (at protein level). Long isoforms are highly expressed in small intestine, colon and kidney (renal proximal tubule epithelial cells). Shorter isoforms are detected at lower levels in testis, thymus and peripheral blood leukocytes.

It is found in the apical cell membrane. The protein localises to the cell membrane. The protein resides in the endosome membrane. Its subcellular location is the membrane. It localises to the coated pit. It is found in the secreted. In terms of biological role, membrane-bound component of the endocytic receptor formed by AMN and CUBN. Required for normal CUBN glycosylation and trafficking to the cell surface. The complex formed by AMN and CUBN is required for efficient absorption of vitamin B12. Required for normal CUBN-mediated protein transport in the kidney. This Homo sapiens (Human) protein is Protein amnionless (AMN).